The sequence spans 42 residues: Potassium channel toxin gamma-KTx 1.2 (42 aa).

4 cysteine pairs are disulfide-bonded: cysteine 5-cysteine 23, cysteine 11-cysteine 34, cysteine 20-cysteine 39, and cysteine 24-cysteine 41.

It belongs to the ergtoxin family. Gamma-KTx 1 subfamily. In terms of tissue distribution, expressed by the venom gland.

The protein resides in the secreted. Functionally, blocks Kv11/ERG potassium channels. The sequence is that of Potassium channel toxin gamma-KTx 1.2 from Centruroides elegans (Bark scorpion).